A 191-amino-acid chain; its full sequence is Adenine phosphoribosyltransferase (191 aa).

It belongs to the purine/pyrimidine phosphoribosyltransferase family. In terms of assembly, homodimer.

The protein resides in the cytoplasm. The enzyme catalyses AMP + diphosphate = 5-phospho-alpha-D-ribose 1-diphosphate + adenine. It functions in the pathway purine metabolism; AMP biosynthesis via salvage pathway; AMP from adenine: step 1/1. Functionally, catalyzes a salvage reaction resulting in the formation of AMP, that is energically less costly than de novo synthesis. In Bordetella bronchiseptica (strain ATCC BAA-588 / NCTC 13252 / RB50) (Alcaligenes bronchisepticus), this protein is Adenine phosphoribosyltransferase.